Reading from the N-terminus, the 147-residue chain is Ribosome-binding factor A (147 aa).

Positions 126-147 (LKKNAQPAGDAHPYKDDDAMND) are disordered. Residues 137–147 (HPYKDDDAMND) show a composition bias toward basic and acidic residues.

Belongs to the RbfA family. Monomer. Binds 30S ribosomal subunits, but not 50S ribosomal subunits or 70S ribosomes.

The protein resides in the cytoplasm. In terms of biological role, one of several proteins that assist in the late maturation steps of the functional core of the 30S ribosomal subunit. Associates with free 30S ribosomal subunits (but not with 30S subunits that are part of 70S ribosomes or polysomes). Required for efficient processing of 16S rRNA. May interact with the 5'-terminal helix region of 16S rRNA. This chain is Ribosome-binding factor A, found in Corynebacterium diphtheriae (strain ATCC 700971 / NCTC 13129 / Biotype gravis).